The chain runs to 402 residues: Zinc finger protein CONSTANS-LIKE 14 (402 aa).

Cys-12, Cys-15, Cys-35, His-40, Cys-55, Cys-58, Cys-78, and His-83 together coordinate Zn(2+). The B box-type 1; atypical zinc finger occupies 12–54 (CEFCGERTAVLFCRADTAKLCLPCDQHVHSANLLSRKHVRSQI). The B box-type 2; atypical zinc-finger motif lies at 55-97 (CDNCSKEPVSVRCFTDNLVLCQECDWDVHGSCSSSATHERSAV). Positions 287–322 (SYQQEDSVHSTSTKGQETSKSNNIPAAIHSHKSSND) are disordered. Residues 295 to 310 (HSTSTKGQETSKSNNI) show a composition bias toward polar residues. The stretch at 345-372 (VTNADLEQMAQNRDNAMQRYKEKKKTRR) forms a coiled coil. The region spanning 357–399 (RDNAMQRYKEKKKTRRYDKTIRYETRKARAETRLRVKGRFVKA) is the CCT domain.

This sequence belongs to the CONSTANS family.

The protein localises to the nucleus. This Arabidopsis thaliana (Mouse-ear cress) protein is Zinc finger protein CONSTANS-LIKE 14 (COL14).